We begin with the raw amino-acid sequence, 120 residues long: NAD(P)H-quinone oxidoreductase subunit 3, chloroplastic (120 aa).

Transmembrane regions (helical) follow at residues 9 to 29, 64 to 84, and 88 to 108; these read IFWAFLIISSVIPILAFLISG, MFALVFVVFDVETVFLYPWAM, and VLGLSVFIEALIFVLILIVGS.

Belongs to the complex I subunit 3 family. As to quaternary structure, NDH is composed of at least 16 different subunits, 5 of which are encoded in the nucleus.

The protein localises to the plastid. It localises to the chloroplast thylakoid membrane. It carries out the reaction a plastoquinone + NADH + (n+1) H(+)(in) = a plastoquinol + NAD(+) + n H(+)(out). The catalysed reaction is a plastoquinone + NADPH + (n+1) H(+)(in) = a plastoquinol + NADP(+) + n H(+)(out). Its function is as follows. NDH shuttles electrons from NAD(P)H:plastoquinone, via FMN and iron-sulfur (Fe-S) centers, to quinones in the photosynthetic chain and possibly in a chloroplast respiratory chain. The immediate electron acceptor for the enzyme in this species is believed to be plastoquinone. Couples the redox reaction to proton translocation, and thus conserves the redox energy in a proton gradient. The protein is NAD(P)H-quinone oxidoreductase subunit 3, chloroplastic of Manihot esculenta (Cassava).